The sequence spans 85 residues: Small ribosomal subunit protein bS20 (85 aa).

A disordered region spans residues 1–24 (MANIKSAIKRAKLSEERRSHNASI).

This sequence belongs to the bacterial ribosomal protein bS20 family.

Binds directly to 16S ribosomal RNA. This Bacillus mycoides (strain KBAB4) (Bacillus weihenstephanensis) protein is Small ribosomal subunit protein bS20.